A 251-amino-acid polypeptide reads, in one-letter code: MAAPVVTMHQLIEAGAHFGHQTHRWNPRMKPYIFGARNGIHILDLSQTVPLMARALEFISATVQAGGKVLFVGTKRQAQEPIAQAARASGQHYVNHRWLGGMLTNWKTISGSIKRFKALEEQLAGDTAGLTKKEVLQLTRERDKFELSLGGIRDMGGIPDVMFVIDANKEELAIKEANVLGIPVVAILDSNVSPEGIAFPIPANDDASRAIRLYCEAVAAAATKGGRDAALASGADLGAMAEPLAEEAAEV.

Belongs to the universal ribosomal protein uS2 family.

The chain is Small ribosomal subunit protein uS2 from Novosphingobium aromaticivorans (strain ATCC 700278 / DSM 12444 / CCUG 56034 / CIP 105152 / NBRC 16084 / F199).